The primary structure comprises 396 residues: Transcriptional regulator Myc-B (396 aa).

Thr-56 carries an O-linked (GlcNAc) threonine glycan. The 9aaTAD motif lies at 79 to 87; that stretch reads EMVSEFLGD. 2 disordered regions span residues 183-251 and 298-318; these read KPCK…THQS and NRKC…RRTH. Low complexity predominate over residues 191–212; that stretch reads PASTTLPLDTPPNSGSSSSSSD. The segment covering 213–230 has biased composition (acidic residues); the sequence is SESDDEDDEDEEEEEEID. Basic and acidic residues predominate over residues 233–244; it reads TVEKRKSVKKSD. The bHLH domain maps to 313-365; that stretch reads DKRRTHNVLERQRRNELKLSFFALRDVIPDVANNEKAAKVVILKKATECIASM. The segment at 372–393 is leucine-zipper; sequence LISLKEQLRRKCEHLKQRLEQL.

As to quaternary structure, efficient DNA binding requires dimerization with another bHLH protein. Binds DNA as a heterodimer with max.

The protein resides in the nucleus. Transcription factor that binds DNA in a non-specific manner, yet also specifically recognizes the core sequence 5'-CAC[GA]TG-3'. Activates the transcription of growth-related genes. The protein is Transcriptional regulator Myc-B of Danio rerio (Zebrafish).